The chain runs to 614 residues: MSTEVYDGAIGIDLGTTYSCVATYEGSNVEIIANEQGSFTTPSFVSFTADERLIGEAAKNQAAMNPANTVFDVKRLIGRRFDDPTVKKDMESWPFKVVDEDGNPKVEVEYLGTTHKFSPQEISAMVLVKMKEIAEAKIGKKVEKAVITVPAYFNDNQRQSTKDAGAISGLNVLRIINEPTAAAIAYGLGSGKSEKERNVLIYDLGGGTFDVSLLNIQGGVFTVKATAGDTHLGGQDFDTNLLDHCKKDFQRKTKKDLSGDARALRRLRTACERAKRTLSNGTQTTLEIDSLFDGEDFSLQITRAKFEELNQTAFKGTLDPVTQVLKDAGVDKAAVDEIVLVGGSTRIPKIQKLLSDYFGGKKLEKSINPDEAVAYGAAVQAGILSGKATSAETADLLLLDVVPLSLGVAMEGNIFAPVVPRGTTVPTLKKRSFTTVADQQQTVQFPVYQGERTNCSENVSLGEFTLAPIPPMRAGEPVLEVVFEVDVNGILKVTATEKTSGRSANITIANSVGKLSTSEIENMISEAEKYKTNDEEFTKKHEAKQQLESYIARVEDIISDPTLALKLKRGQKEKIENTMSEAMAQLELGESTADDLKKKELALKRAVTKAMSSR.

Residues M1 to E392 are nucleotide binding domain (NBD). ATP contacts are provided by residues T16–Y18, K74, G206–T208, E272–S279, and G343. Positions T393–P403 are inter-domain linker. The segment at L404 to R614 is substrate binding domain (SBD). Residues T517–S613 are lid domain (SBDalpha). A Nuclear export signal motif is present at residues I575 to M583.

It belongs to the heat shock protein 70 family. As to quaternary structure, interacts with HAT1 in starvation conditions.

It is found in the nucleus. The protein localises to the cytoplasm. The catalysed reaction is ATP + H2O = ADP + phosphate + H(+). Functionally, chaperone that interacts with the histone acetyltransferase HAT1 and mediates its translocation from the nucleus to the cytoplasm during germination and starvation conditions. Within the cytoplasm, HAT1 regulates autophagy via acetylation of the autophagy-related proteins ATG3 and ATG9. This chain is Heat shock protein SSB1, found in Pyricularia oryzae (strain 70-15 / ATCC MYA-4617 / FGSC 8958) (Rice blast fungus).